Here is a 164-residue protein sequence, read N- to C-terminus: Putative histone H2B type 2-D (164 aa).

A compositionally biased stretch (low complexity) spans 1 to 12 (MPEPAKFAPAPK). The segment at 1 to 33 (MPEPAKFAPAPKKGSKKAVTKAQKKDGKKRKRS) is disordered. The residue at position 2 (Pro-2) is an N-acetylproline. Lys-6 is modified (N6-(2-hydroxyisobutyryl)lysine; alternate). 2 positions are modified to N6-(beta-hydroxybutyryl)lysine; alternate: Lys-6 and Lys-12. N6-acetyllysine; alternate occurs at positions 6, 12, and 13. N6-butyryllysine; alternate is present on Lys-6. An N6-crotonyllysine; alternate mark is found at Lys-6, Lys-12, and Lys-13. An N6-lactoyllysine; alternate mark is found at Lys-6 and Lys-12. Lys-6 participates in a covalent cross-link: Glycyl lysine isopeptide (Lys-Gly) (interchain with G-Cter in SUMO2); alternate. Residue Lys-13 is modified to N6-(2-hydroxyisobutyryl)lysine; alternate. Residue Ser-15 is modified to Phosphoserine; by STK4/MST1. Lys-16, Lys-17, Lys-21, and Lys-24 each carry N6-acetyllysine; alternate. N6-crotonyllysine; alternate occurs at positions 16, 17, 21, and 24. N6-lactoyllysine; alternate is present on residues Lys-16, Lys-17, Lys-21, and Lys-24. Residues Lys-17 and Lys-21 each carry the N6-(beta-hydroxybutyryl)lysine; alternate modification. The residue at position 17 (Lys-17) is an N6-glutaryllysine; alternate. 2 positions are modified to N6-(2-hydroxyisobutyryl)lysine; alternate: Lys-21 and Lys-24. Lys-21 carries the N6-butyryllysine; alternate modification. Residue Lys-21 forms a Glycyl lysine isopeptide (Lys-Gly) (interchain with G-Cter in SUMO2); alternate linkage. Lys-25 is subject to N6-(2-hydroxyisobutyryl)lysine. Lys-35 is subject to N6-(2-hydroxyisobutyryl)lysine; alternate. At Lys-35 the chain carries N6-(beta-hydroxybutyryl)lysine; alternate. Lys-35 is modified (N6-crotonyllysine; alternate). Lys-35 carries the post-translational modification N6-glutaryllysine; alternate. Lys-35 is subject to N6-succinyllysine; alternate. A Glycyl lysine isopeptide (Lys-Gly) (interchain with G-Cter in ubiquitin); alternate cross-link involves residue Lys-35. Ser-37 carries the post-translational modification Phosphoserine; by AMPK. 3 positions are modified to N6-(2-hydroxyisobutyryl)lysine; alternate: Lys-44, Lys-47, and Lys-58. Residue Lys-44 is modified to N6-lactoyllysine; alternate. Residues Lys-44 and Lys-47 each carry the N6-glutaryllysine; alternate modification. Lys-47 bears the N6-methyllysine; alternate mark. Lys-58 carries the post-translational modification N6,N6-dimethyllysine; alternate. Arg-80 is subject to Dimethylated arginine. At Lys-86 the chain carries N6-(2-hydroxyisobutyryl)lysine; alternate. Lys-86 is subject to N6-(beta-hydroxybutyryl)lysine; alternate. Lys-86 carries the N6-acetyllysine; alternate modification. Lys-86 bears the N6-lactoyllysine; alternate mark. Lys-86 is modified (N6,N6,N6-trimethyllysine; alternate). 2 positions are modified to omega-N-methylarginine: Arg-87 and Arg-93. The disordered stretch occupies residues 111 to 140 (PCPRAPRRSPSTPAPSESLPGPGARSLPPS).

Belongs to the histone H2B family. As to quaternary structure, the nucleosome is a histone octamer containing two molecules each of H2A, H2B, H3 and H4 assembled in one H3-H4 heterotetramer and two H2A-H2B heterodimers. The octamer wraps approximately 147 bp of DNA. In terms of processing, phosphorylation at Ser-37 (H2BS36ph) by AMPK in response to stress promotes transcription. Phosphorylated on Ser-15 (H2BS14ph) by STK4/MST1 during apoptosis; which facilitates apoptotic chromatin condensation. Also phosphorylated on Ser-15 in response to DNA double strand breaks (DSBs), and in correlation with somatic hypermutation and immunoglobulin class-switch recombination. Post-translationally, crotonylation (Kcr) is specifically present in male germ cells and marks testis-specific genes in post-meiotic cells, including X-linked genes that escape sex chromosome inactivation in haploid cells. Crotonylation marks active promoters and enhancers and confers resistance to transcriptional repressors. It is also associated with post-meiotically activated genes on autosomes. Lactylated in macrophages by EP300/P300 by using lactoyl-CoA directly derived from endogenous or exogenous lactate, leading to stimulates gene transcription.

It localises to the nucleus. It is found in the chromosome. Its function is as follows. Core component of nucleosome. Nucleosomes wrap and compact DNA into chromatin, limiting DNA accessibility to the cellular machineries which require DNA as a template. Histones thereby play a central role in transcription regulation, DNA repair, DNA replication and chromosomal stability. DNA accessibility is regulated via a complex set of post-translational modifications of histones, also called histone code, and nucleosome remodeling. The chain is Putative histone H2B type 2-D from Homo sapiens (Human).